The primary structure comprises 174 residues: NADH-quinone oxidoreductase subunit B 1 (174 aa).

4 residues coordinate [4Fe-4S] cluster: cysteine 38, cysteine 39, cysteine 104, and cysteine 133.

Belongs to the complex I 20 kDa subunit family. In terms of assembly, NDH-1 is composed of 14 different subunits. Subunits NuoB, C, D, E, F, and G constitute the peripheral sector of the complex. Requires [4Fe-4S] cluster as cofactor.

It localises to the cell membrane. It catalyses the reaction a quinone + NADH + 5 H(+)(in) = a quinol + NAD(+) + 4 H(+)(out). Functionally, NDH-1 shuttles electrons from NADH, via FMN and iron-sulfur (Fe-S) centers, to quinones in the respiratory chain. The immediate electron acceptor for the enzyme in this species is believed to be ubiquinone. Couples the redox reaction to proton translocation (for every two electrons transferred, four hydrogen ions are translocated across the cytoplasmic membrane), and thus conserves the redox energy in a proton gradient. This is NADH-quinone oxidoreductase subunit B 1 from Chloroflexus aggregans (strain MD-66 / DSM 9485).